A 313-amino-acid chain; its full sequence is MSGIDPKSFGKVAVLLGGASAEREVSLNSGRLVLQGLRDAGVDAYAFDPAERPLAALKDEGFVRAFNALHGGYGENGQIQGALDFYGIRYTGSGVLGSALGLDKFRTKLVWQQLGIPTPPFEAVLRGDDYAARAQGIVAKLGLPLFVKPASEGSSVAVIKVKTADALVPALEEAVKFDKIVVVEKSIEGGGEYTACIAGDLDLPIIRIVPAGEFYDYHAKYIANDTQYMIPCGIAAEEEARLKKLARQAFDVLGCTDWGRADFMLDGEGNAYFLEVNTAPGMTDHSLPPKAARAVGISYQELVVKVLALTLKD.

An ATP-grasp domain is found at 108–308; the sequence is KLVWQQLGIP…YQELVVKVLA (201 aa). 138 to 193 is a binding site for ATP; it reads VAKLGLPLFVKPASEGSSVAVIKVKTADALVPALEEAVKFDKIVVVEKSIEGGGEY. D262, E275, and N277 together coordinate Mg(2+).

This sequence belongs to the D-alanine--D-alanine ligase family. It depends on Mg(2+) as a cofactor. Requires Mn(2+) as cofactor.

It is found in the cytoplasm. It carries out the reaction 2 D-alanine + ATP = D-alanyl-D-alanine + ADP + phosphate + H(+). Its pathway is cell wall biogenesis; peptidoglycan biosynthesis. Functionally, cell wall formation. The chain is D-alanine--D-alanine ligase from Paraburkholderia phymatum (strain DSM 17167 / CIP 108236 / LMG 21445 / STM815) (Burkholderia phymatum).